Reading from the N-terminus, the 220-residue chain is MAYRDQPLGELALSIPRASALFRQYDMDYCCGGKQTLARAAARHDVDIDIIEAQLAQLAEQPIEKDWRAVPLADIIDHIVVRYHDRHREQLPELILQATKVERVHADKPNVPRGLTKYLTALHEELSSHMMKEEQILFPMIKQGMGRQATGPISVMEIEHDEAGELVDVIKHVTQNVTPPPEACTTWKAMYNGINEMIDDLMEHISLENNVLFPRALAGE.

The protein belongs to the RIC family. YtfE subfamily. In terms of assembly, homodimer.

It localises to the cytoplasm. Di-iron-containing protein involved in the repair of iron-sulfur clusters damaged by oxidative and nitrosative stress conditions. The sequence is that of Iron-sulfur cluster repair protein YtfE from Salmonella schwarzengrund (strain CVM19633).